Reading from the N-terminus, the 496-residue chain is O-acetyltransferase cpsE (496 aa).

Residues 203–217 show a composition bias toward polar residues; the sequence is IGTQGQLPDGVQSSD. Positions 203–228 are disordered; the sequence is IGTQGQLPDGVQSSDDPTDGAGDIFE.

It belongs to the fumigaclavine B O-acetyltransferase family.

It catalyses the reaction campesine A + acetyl-CoA = campesine C + CoA. It functions in the pathway alkaloid biosynthesis. Functionally, O-acetyltransferase; part of the gene cluster that mediates the biosynthesis of campesine G, a dimeric indole piperazine alkaloid that shows good insecticidal activity Galleria mellonella. Within the pathway, cpsE acetylates N13 of campesine A to produce campesine C. CpsE produces an inseparable mixture of two acyl-atropisomers due to the spontaneous rotation of an acyl group at N13 of piperazine ring. The non-canonical non-ribosomal peptide synthetase cpsA catalyzes the first steps of the pathway by producing L-tryptophanal and L-valinal from their respective amino-acids. These products condensate spontaneously to form trypyl-valyl pyrazine also known as didehydrocampesine A. The NmrA-like family domain-containing oxidoreductase cpsB is the next enzyme in cps pathway and reduces the unstable didehydrocampesine A to campesine A. The methyltransferase cpsF and the acetyltransferase cpsE both recognize N13 of piperazine ring to carry out methylation and acetylation of campesine A to produce campesine C and B, respectively. The cytochrome P450 monooxygenase cpsD then acts as a dimerase that catalyzes oxidative heterocoupling between campesine B and C to produce heterodimers with unexpected 6/5/6/6/6/6/5/6 eight-ring scaffold called campesine D. Finally,the cytochrome P450 monooxygenase cpsC is a regioselective dehydrogenase that catalyzes dehydrogenation reaction towards C2-N1 to produce campesine G. In Aspergillus campestris (strain IBT 28561), this protein is O-acetyltransferase cpsE.